The sequence spans 614 residues: Dihydroxy-acid dehydratase 1 (614 aa).

Residue aspartate 81 participates in Mg(2+) binding. Cysteine 122 contributes to the [2Fe-2S] cluster binding site. 2 residues coordinate Mg(2+): aspartate 123 and lysine 124. The residue at position 124 (lysine 124) is an N6-carboxylysine. [2Fe-2S] cluster is bound at residue cysteine 195. Residue glutamate 491 coordinates Mg(2+). The active-site Proton acceptor is the serine 517.

The protein belongs to the IlvD/Edd family. As to quaternary structure, homodimer. [2Fe-2S] cluster serves as cofactor. Mg(2+) is required as a cofactor.

The catalysed reaction is (2R)-2,3-dihydroxy-3-methylbutanoate = 3-methyl-2-oxobutanoate + H2O. It catalyses the reaction (2R,3R)-2,3-dihydroxy-3-methylpentanoate = (S)-3-methyl-2-oxopentanoate + H2O. It functions in the pathway amino-acid biosynthesis; L-isoleucine biosynthesis; L-isoleucine from 2-oxobutanoate: step 3/4. It participates in amino-acid biosynthesis; L-valine biosynthesis; L-valine from pyruvate: step 3/4. Functionally, functions in the biosynthesis of branched-chain amino acids. Catalyzes the dehydration of (2R,3R)-2,3-dihydroxy-3-methylpentanoate (2,3-dihydroxy-3-methylvalerate) into 2-oxo-3-methylpentanoate (2-oxo-3-methylvalerate) and of (2R)-2,3-dihydroxy-3-methylbutanoate (2,3-dihydroxyisovalerate) into 2-oxo-3-methylbutanoate (2-oxoisovalerate), the penultimate precursor to L-isoleucine and L-valine, respectively. This is Dihydroxy-acid dehydratase 1 from Mesorhizobium japonicum (strain LMG 29417 / CECT 9101 / MAFF 303099) (Mesorhizobium loti (strain MAFF 303099)).